A 569-amino-acid chain; its full sequence is Proline--tRNA ligase (569 aa).

The protein belongs to the class-II aminoacyl-tRNA synthetase family. ProS type 1 subfamily. As to quaternary structure, homodimer.

It is found in the cytoplasm. The catalysed reaction is tRNA(Pro) + L-proline + ATP = L-prolyl-tRNA(Pro) + AMP + diphosphate. Catalyzes the attachment of proline to tRNA(Pro) in a two-step reaction: proline is first activated by ATP to form Pro-AMP and then transferred to the acceptor end of tRNA(Pro). As ProRS can inadvertently accommodate and process non-cognate amino acids such as alanine and cysteine, to avoid such errors it has two additional distinct editing activities against alanine. One activity is designated as 'pretransfer' editing and involves the tRNA(Pro)-independent hydrolysis of activated Ala-AMP. The other activity is designated 'posttransfer' editing and involves deacylation of mischarged Ala-tRNA(Pro). The misacylated Cys-tRNA(Pro) is not edited by ProRS. The chain is Proline--tRNA ligase from Legionella pneumophila (strain Corby).